We begin with the raw amino-acid sequence, 266 residues long: U2 small nuclear ribonucleoprotein A' (266 aa).

LRR repeat units lie at residues Ile-30 to Ala-51, Pro-53 to Asp-74, Asp-75 to Pro-95, and Lys-97 to Ser-118. In terms of domain architecture, LRRCT spans Asn-132 to Asp-170.

It belongs to the U2 small nuclear ribonucleoprotein A family. Associated with the spliceosome.

The protein resides in the nucleus. Functionally, involved in pre-mRNA splicing. This Candida glabrata (strain ATCC 2001 / BCRC 20586 / JCM 3761 / NBRC 0622 / NRRL Y-65 / CBS 138) (Yeast) protein is U2 small nuclear ribonucleoprotein A' (LEA1).